Here is a 478-residue protein sequence, read N- to C-terminus: Cytochrome c-552 (478 aa).

The N-terminal stretch at 1–26 is a signal peptide; sequence MARKTLRARRFFSLIFPFFFITSVYA. Residue H94 coordinates heme c. Heme-binding residues include C122, C125, and K126. Heme c is bound by residues C160, C163, H164, C209, C212, and H213. The Ca(2+) site is built by E215, Y216, K261, and Q263. Residue Y216 participates in substrate binding. H264 is a binding site for substrate. H275, C282, C285, H286, H301, C314, C317, H318, and H393 together coordinate heme c.

It belongs to the cytochrome c-552 family. Ca(2+) is required as a cofactor. Requires heme c as cofactor.

It is found in the periplasm. It carries out the reaction 6 Fe(III)-[cytochrome c] + NH4(+) + 2 H2O = 6 Fe(II)-[cytochrome c] + nitrite + 8 H(+). Its pathway is nitrogen metabolism; nitrate reduction (assimilation). Catalyzes the reduction of nitrite to ammonia, consuming six electrons in the process. The polypeptide is Cytochrome c-552 (Salmonella paratyphi A (strain ATCC 9150 / SARB42)).